Here is a 101-residue protein sequence, read N- to C-terminus: Small ribosomal subunit protein uS14 (101 aa).

Belongs to the universal ribosomal protein uS14 family. As to quaternary structure, part of the 30S ribosomal subunit. Contacts proteins S3 and S10.

Binds 16S rRNA, required for the assembly of 30S particles and may also be responsible for determining the conformation of the 16S rRNA at the A site. The protein is Small ribosomal subunit protein uS14 of Anaplasma phagocytophilum (strain HZ).